Here is a 396-residue protein sequence, read N- to C-terminus: Metacaspase-1 (396 aa).

A compositionally biased stretch (gly residues) spans 1 to 20 (MSGYPGQGYQGQGYGQGYGQ). Residues 1–86 (MSGYPGQGYQ…PQGMQQFGHG (86 aa)) are disordered. Residues 47–62 (HYQYGPPQGGYQYPPQ) are compositionally biased toward low complexity. Positions 72–81 (QAHQPPQGMQ) are enriched in polar residues. Active-site residues include His-186 and Cys-242.

Belongs to the peptidase C14B family.

In terms of biological role, involved in cell death (apoptosis). This Pyricularia oryzae (strain 70-15 / ATCC MYA-4617 / FGSC 8958) (Rice blast fungus) protein is Metacaspase-1 (MCA1).